The primary structure comprises 534 residues: Tyrosine-protein kinase Fyn (534 aa).

Glycine 2 carries N-myristoyl glycine lipidation. 2 S-palmitoyl cysteine lipidation sites follow: cysteine 3 and cysteine 6. At threonine 12 the chain carries Phosphothreonine; by PKC. Residues 15–39 (TDERDGSLTQSSGYRYGTDPTPQHY) are disordered. Residues 82–143 (TGVTLFEALY…PSNYVAPVDS (62 aa)) enclose the SH3 domain. In terms of domain architecture, SH2 spans 149 to 246 (WYFGKLGRKD…GLCFNLTVIA (98 aa)). Residues 268 to 521 (LFLEQKLGQG…YLQGFLEDYF (254 aa)) enclose the Protein kinase domain. ATP is bound by residues 274–282 (LGQGCFAEV) and lysine 296. The active-site Proton acceptor is aspartate 387. Residue tyrosine 417 is modified to Phosphotyrosine; by autocatalysis. At tyrosine 528 the chain carries Phosphotyrosine.

The protein belongs to the protein kinase superfamily. Tyr protein kinase family. SRC subfamily. In terms of assembly, associates through its SH3 domain, to the p85 subunit of phosphatidylinositol 3-kinase. It depends on Mn(2+) as a cofactor. As to expression, thymus and spleen.

It is found in the cytoplasm. It localises to the nucleus. Its subcellular location is the cell membrane. The protein localises to the perikaryon. It carries out the reaction L-tyrosyl-[protein] + ATP = O-phospho-L-tyrosyl-[protein] + ADP + H(+). Inhibited by phosphorylation of Tyr-528 by leukocyte common antigen and activated by dephosphorylation of this site. In terms of biological role, tyrosine-protein kinase implicated in the control of cell growth. Plays a role in the regulation of intracellular calcium levels. Required in brain development and mature brain function with important roles in the regulation of axon growth, axon guidance, and neurite extension. Role in CNTN1-mediated signaling. The polypeptide is Tyrosine-protein kinase Fyn (FYN) (Gallus gallus (Chicken)).